The sequence spans 96 residues: Large ribosomal subunit protein uL23 (96 aa).

This sequence belongs to the universal ribosomal protein uL23 family. As to quaternary structure, part of the 50S ribosomal subunit. Contacts protein L29, and trigger factor when it is bound to the ribosome.

In terms of biological role, one of the early assembly proteins it binds 23S rRNA. One of the proteins that surrounds the polypeptide exit tunnel on the outside of the ribosome. Forms the main docking site for trigger factor binding to the ribosome. In Caldicellulosiruptor bescii (strain ATCC BAA-1888 / DSM 6725 / KCTC 15123 / Z-1320) (Anaerocellum thermophilum), this protein is Large ribosomal subunit protein uL23.